Here is a 182-residue protein sequence, read N- to C-terminus: MAPKLLLHGCCAHCTAYSFKYWQEQGFAVSVYWYNPNIHPFMEHQSRLEAMRKLSAEMGFELITEPSYHMAEYFKNVSANVDGRCRICFDMRLGQTAAYAAGHGYEYFSSSLFISPHQKHQDAVCSAEALAKETGVRFAYADLRKRYSDSRHITKPLDLYRQQYCGCVYSEYERFGKPNSPA.

[4Fe-4S] cluster is bound by residues Cys-10, Cys-11, Cys-85, and Cys-88. Cysteines 165 and 167 form a disulfide.

It belongs to the QueH family.

It carries out the reaction epoxyqueuosine(34) in tRNA + AH2 = queuosine(34) in tRNA + A + H2O. It functions in the pathway tRNA modification; tRNA-queuosine biosynthesis. In terms of biological role, catalyzes the conversion of epoxyqueuosine (oQ) to queuosine (Q), which is a hypermodified base found in the wobble positions of tRNA(Asp), tRNA(Asn), tRNA(His) and tRNA(Tyr). This Dehalococcoides mccartyi (strain ATCC BAA-2266 / KCTC 15142 / 195) (Dehalococcoides ethenogenes (strain 195)) protein is Epoxyqueuosine reductase QueH.